The primary structure comprises 473 residues: UDP-glycosyltransferase 91D2 (473 aa).

H26 (proton acceptor) is an active-site residue. An anthocyanidin is bound at residue H26. D121 (charge relay) is an active-site residue. UDP-alpha-D-glucose contacts are provided by A344, Q346, H361, S366, and E369. Residue G384 coordinates an anthocyanidin. UDP-alpha-D-glucose is bound by residues D385 and Q386.

This sequence belongs to the UDP-glycosyltransferase family.

The enzyme catalyses steviolmonoside + UDP-alpha-D-glucose = steviolbioside + UDP + H(+). It catalyses the reaction rubusoside + UDP-alpha-D-glucose = stevioside + UDP + H(+). The catalysed reaction is stevioside + UDP-alpha-D-glucose = rebaudioside E + UDP + H(+). It carries out the reaction rebaudioside A + UDP-alpha-D-glucose = rebaudioside D + UDP + H(+). Its function is as follows. Involved in the biosynthesis of steviol glycosides in leaves. Converts the mono-glycoside steviolmonoside to the bi-glycoside steviolbioside. Converts the bi-glycoside rubusoside to the tri-glycoside stevioside. Converts the tri-glycoside stevioside to the tetra-glycoside rebaudioside E. Converts the tetra-glycoside rebaudioside A to the penta-glycoside rebaudioside E. The sequence is that of UDP-glycosyltransferase 91D2 from Stevia rebaudiana (Stevia).